Reading from the N-terminus, the 260-residue chain is Tryptophan synthase alpha chain (260 aa).

Catalysis depends on proton acceptor residues E52 and D63.

The protein belongs to the TrpA family. Tetramer of two alpha and two beta chains.

It catalyses the reaction (1S,2R)-1-C-(indol-3-yl)glycerol 3-phosphate + L-serine = D-glyceraldehyde 3-phosphate + L-tryptophan + H2O. Its pathway is amino-acid biosynthesis; L-tryptophan biosynthesis; L-tryptophan from chorismate: step 5/5. Its function is as follows. The alpha subunit is responsible for the aldol cleavage of indoleglycerol phosphate to indole and glyceraldehyde 3-phosphate. The polypeptide is Tryptophan synthase alpha chain (Streptococcus thermophilus (strain ATCC BAA-491 / LMD-9)).